Here is a 448-residue protein sequence, read N- to C-terminus: JmjC domain-containing protein D (448 aa).

A JmjC domain is found at 305 to 448; it reads EQIPQLRNDI…SLSQSFSIFP (144 aa).

This chain is JmjC domain-containing protein D (jcdD), found in Dictyostelium discoideum (Social amoeba).